A 28-amino-acid polypeptide reads, in one-letter code: Basic phospholipase A2 homolog BmatTX-II (28 aa).

Monomer. Expressed by the venom gland.

Its subcellular location is the secreted. In terms of biological role, snake venom phospholipase A2 homolog that lacks enzymatic activity. Shows high myotoxic activity, neutrophil activation (demonstrated by activation induction of IL-1beta production), and slight cytotoxicity against Jurkat (leukemia T) and SK-BR-3 (breast adenocarcinoma) tumor cell lines. A model of myotoxic mechanism has been proposed: an apo Lys49-PLA2 is activated by the entrance of a hydrophobic molecule (e.g. fatty acid) at the hydrophobic channel of the protein leading to a reorientation of a monomer. This reorientation causes a transition between 'inactive' to 'active' states, causing alignment of C-terminal and membrane-docking sites (MDoS) side-by-side and putting the membrane-disruption sites (MDiS) in the same plane, exposed to solvent and in a symmetric position for both monomers. The MDoS region stabilizes the toxin on membrane by the interaction of charged residues with phospholipid head groups. Subsequently, the MDiS region destabilizes the membrane with penetration of hydrophobic residues. This insertion causes a disorganization of the membrane, allowing an uncontrolled influx of ions (i.e. calcium and sodium), and eventually triggering irreversible intracellular alterations and cell death. The polypeptide is Basic phospholipase A2 homolog BmatTX-II (Bothrops mattogrossensis (Pitviper)).